A 147-amino-acid polypeptide reads, in one-letter code: MAAAADSFSGGPAGVRLPRSPPLKVLAEQLRRDAEGGPGAWRLSRAAAGRGPLDLAAVWMQGRVVMADRGEARLRDPSGDFSVRGLERVPRGRPCLVPGKYVMVMGVVQACSPEPCLQAVKMTDLSDNPIHESMWELEVEDLHRNIP.

The tract at residues 1 to 20 is disordered; sequence MAAAADSFSGGPAGVRLPRS. An N-acetylalanine modification is found at alanine 2. Serine 7 carries the post-translational modification Phosphoserine. The segment at residues 44 to 114 is a DNA-binding region (OB); sequence SRAAAGRGPL…MGVVQACSPE (71 aa).

This sequence belongs to the RMI2 family. Component of the RMI complex, containing at least TOP3A, RMI1 and RMI2. The RMI complex interacts with BLM. Post-translationally, phosphorylated during mitosis.

It is found in the nucleus. Essential component of the RMI complex, a complex that plays an important role in the processing of homologous recombination intermediates. It is required to regulate sister chromatid segregation and to limit DNA crossover. Essential for the stability, localization, and function of BLM, TOP3A, and complexes containing BLM. In the RMI complex, it is required to target BLM to chromatin and stress-induced nuclear foci and mitotic phosphorylation of BLM. In Homo sapiens (Human), this protein is RecQ-mediated genome instability protein 2 (RMI2).